Here is a 284-residue protein sequence, read N- to C-terminus: Bifunctional protein FolD (284 aa).

NADP(+) contacts are provided by residues 166 to 168, serine 191, and isoleucine 232; that span reads GAS.

Belongs to the tetrahydrofolate dehydrogenase/cyclohydrolase family. As to quaternary structure, homodimer.

The catalysed reaction is (6R)-5,10-methylene-5,6,7,8-tetrahydrofolate + NADP(+) = (6R)-5,10-methenyltetrahydrofolate + NADPH. The enzyme catalyses (6R)-5,10-methenyltetrahydrofolate + H2O = (6R)-10-formyltetrahydrofolate + H(+). The protein operates within one-carbon metabolism; tetrahydrofolate interconversion. In terms of biological role, catalyzes the oxidation of 5,10-methylenetetrahydrofolate to 5,10-methenyltetrahydrofolate and then the hydrolysis of 5,10-methenyltetrahydrofolate to 10-formyltetrahydrofolate. The protein is Bifunctional protein FolD of Neisseria gonorrhoeae (strain ATCC 700825 / FA 1090).